The chain runs to 184 residues: Thymidine kinase (184 aa).

Residues 10–17 (GPMYSGKT), His53, and 83–86 (DEVQ) each bind ATP. The active-site Proton acceptor is Glu84. Substrate is bound at residue His115. Zn(2+)-binding residues include Cys140 and Cys143. Substrate contacts are provided by residues 161–164 (IDVG) and Tyr169. Residues Cys173 and Cys176 each contribute to the Zn(2+) site.

Belongs to the thymidine kinase family. As to quaternary structure, homotetramer.

It localises to the cytoplasm. The enzyme catalyses thymidine + ATP = dTMP + ADP + H(+). The polypeptide is Thymidine kinase (tdk) (Thermotoga maritima (strain ATCC 43589 / DSM 3109 / JCM 10099 / NBRC 100826 / MSB8)).